The sequence spans 93 residues: Large ribosomal subunit protein uL23cy (93 aa).

This sequence belongs to the universal ribosomal protein uL23 family. As to quaternary structure, part of the 50S ribosomal subunit.

The protein localises to the plastid. It localises to the chloroplast. In terms of biological role, binds to 23S rRNA. The sequence is that of Large ribosomal subunit protein uL23cy (rpl23-B) from Agrostis stolonifera (Creeping bentgrass).